A 959-amino-acid polypeptide reads, in one-letter code: MTVTTPFVNGTSYCTVTAYSVQSYKAAIDFYTKFLSLENRSSPDENSTLLSNDSISLKILLRPDEKINKNVEAHLKELNSITKTQDWRSHATQSLVFNTSDILAVKDTLNAMNAPLQGYPTELFPMQLYTLDPLGNVVGVTSTKNAVSTKPTPPPAPEASAESGLSSKVHSYTDLAYRMKTTDTYPSLPKPLNRPQKAIAVMTSGGDAPGMNSNVRAIVRSAIFKGCRAFVVMEGYEGLVRGGPEYIKEFHWEDVRGWSAEGGTNIGTARCMEFKKREGRLLGAQHLIEAGVDALIVCGGDGSLTGADLFRSEWPSLIEELLKTNRISNEQYERMKHLNICGTVGSIDNDMSTTDATIGAYSALDRICKAIDYVEATANSHSRAFVVEVMGRNCGWLALLAGIATSADYIFIPEKPATSSEWQDQMCDIVSKHRSRGKRTTIVVVAEGAIAADLTPISPSDVHKVLVDRLGLDTRITTLGHVQRGGTAVAYDRILATLQGLEAVNAVLESTPDTPSPLIAVNENKIVRKPLMESVKLTKAVAEAIQAKDFKRAMSLRDTEFIEHLNNFMAINSADHNEPKLPKDKRLKIAIVNVGAPAGGINSAVYSMATYCMSQGHRPYAIYNGWSGLARHESVRSLNWKDMLGWQSRGGSEIGTNRVTPEEADLGMIAYYFQKYEFDGLIIVGGFEAFESLHQLERARESYPAFRIPMVLIPATLSNNVPGTEYSLGSDTALNALMEYCDVVKQSASSTRGRAFVVDCQGGNSGYLATYASLAVGAQVSYVPEEGISLEQLSEDIEYLAQSFEKAEGRGRFGKLILKSTNASKALSATKLAEVITAEADGRFDAKPAYPGHVQQGGLPSPIDRTRATRMAIKAVGFIKDNQAAIAEARAAEENFNADDKTISDTAAVVGVKGSHVVYNSIRQLYDYETEVSMRMPKVIHWQATRLIADHLVGRKRVD.

The N-terminal catalytic PFK domain 1 stretch occupies residues 2–573; sequence TVTTPFVNGT…HLNNFMAINS (572 aa). Residues 144–167 form a disordered region; that stretch reads KNAVSTKPTPPPAPEASAESGLSS. Thr-152 carries the phosphothreonine modification. Residues 158 to 167 show a composition bias toward low complexity; that stretch reads EASAESGLSS. Phosphoserine is present on residues Ser-163 and Ser-171. ATP contacts are provided by residues Gly-206, 270-271, and 300-303; these read RC and GDGS. Asp-301 serves as a coordination point for Mg(2+). Residues 346–348, Arg-383, 390–392, Glu-447, Arg-475, and 481–484 contribute to the beta-D-fructose 6-phosphate site; these read SID, MGR, and HVQR. The Proton acceptor role is filled by Asp-348. Residues 574-587 are interdomain linker; the sequence is ADHNEPKLPKDKRL. A C-terminal regulatory PFK domain 2 region spans residues 588–959; sequence KIAIVNVGAP…DHLVGRKRVD (372 aa). Beta-D-fructose 2,6-bisphosphate is bound by residues Arg-658, 716–720, Arg-754, and 761–763; these read TLSNN and QGG. The residue at position 803 (Ser-803) is a Phosphoserine. Residues Lys-847, 853–856, and Arg-935 contribute to the beta-D-fructose 2,6-bisphosphate site; that span reads HVQQ.

This sequence belongs to the phosphofructokinase type A (PFKA) family. ATP-dependent PFK group I subfamily. Eukaryotic two domain clade 'E' sub-subfamily. In terms of assembly, heterooctamer of 4 alpha and 4 beta chains. The cofactor is Mg(2+).

It localises to the cytoplasm. The protein localises to the mitochondrion outer membrane. The enzyme catalyses beta-D-fructose 6-phosphate + ATP = beta-D-fructose 1,6-bisphosphate + ADP + H(+). It participates in carbohydrate degradation; glycolysis; D-glyceraldehyde 3-phosphate and glycerone phosphate from D-glucose: step 3/4. Allosterically activated by ADP, AMP, or fructose 2,6-bisphosphate, and allosterically inhibited by ATP or citrate. Its function is as follows. Catalyzes the phosphorylation of D-fructose 6-phosphate to fructose 1,6-bisphosphate by ATP, the first committing step of glycolysis. This chain is ATP-dependent 6-phosphofructokinase subunit beta (PFK2), found in Saccharomyces cerevisiae (strain ATCC 204508 / S288c) (Baker's yeast).